Here is a 216-residue protein sequence, read N- to C-terminus: Somatotropin (216 aa).

Positions 1 to 26 (MATDSRTSWLLTVSLLCLLWPQEASA) are cleaved as a signal peptide. His-45 provides a ligand contact to Zn(2+). An intrachain disulfide couples Cys-78 to Cys-189. The residue at position 131 (Ser-131) is a Phosphoserine. Glu-198 is a binding site for Zn(2+). The cysteines at positions 206 and 214 are disulfide-linked.

This sequence belongs to the somatotropin/prolactin family.

It is found in the secreted. Its function is as follows. Plays an important role in growth control. Its major role in stimulating body growth is to stimulate the liver and other tissues to secrete IGF1. It stimulates both the differentiation and proliferation of myoblasts. It also stimulates amino acid uptake and protein synthesis in muscle and other tissues. The sequence is that of Somatotropin (Gh1) from Mus musculus (Mouse).